Consider the following 276-residue polypeptide: uncharacterized protein (276 aa).

Positions 1–4 (MNRG) are cleaved as a propeptide — leader sequence. Met-5 carries the post-translational modification N-methylmethionine. The chain crosses the membrane as a helical span at residues 5-26 (MTLIELLVALALSIILSLGLYY).

The protein resides in the membrane. This is an uncharacterized protein from Aquifex aeolicus (strain VF5).